Here is a 397-residue protein sequence, read N- to C-terminus: Dual specificity mitogen-activated protein kinase kinase 2 (397 aa).

Residues 1-21 form a disordered region; that stretch reads MAPKRRPVPLIIAPTGEGQST. The Protein kinase domain maps to 69–366; the sequence is FDPICELGAG…LKMLMGHTFI (298 aa). Residues 75 to 83 and Lys98 each bind ATP; that span reads LGAGNGGVV. Asp191 (proton acceptor) is an active-site residue. Ser219 and Ser223 each carry phosphoserine; by RAF. The disordered stretch occupies residues 284–306; the sequence is GGAEGHSMSPRQRPPGRPVSGHG.

The protein belongs to the protein kinase superfamily. STE Ser/Thr protein kinase family. MAP kinase kinase subfamily. Post-translationally, phosphorylation on Ser/Thr by MAP kinase kinase kinases (RAF) positively regulates the kinase activity.

It catalyses the reaction L-seryl-[protein] + ATP = O-phospho-L-seryl-[protein] + ADP + H(+). The enzyme catalyses L-threonyl-[protein] + ATP = O-phospho-L-threonyl-[protein] + ADP + H(+). It carries out the reaction L-tyrosyl-[protein] + ATP = O-phospho-L-tyrosyl-[protein] + ADP + H(+). Functionally, catalyzes the concomitant phosphorylation of a threonine and a tyrosine residue in a Thr-Glu-Tyr sequence located in MAP kinases. This is Dual specificity mitogen-activated protein kinase kinase 2 (map2k2) from Cyprinus carpio (Common carp).